Here is a 70-residue protein sequence, read N- to C-terminus: Large ribosomal subunit protein bL31c (70 aa).

This sequence belongs to the bacterial ribosomal protein bL31 family. Type A subfamily. As to quaternary structure, part of the 50S ribosomal subunit.

It localises to the plastid. The protein localises to the chloroplast. Its function is as follows. Binds the 23S rRNA. The chain is Large ribosomal subunit protein bL31c from Pyropia yezoensis (Susabi-nori).